A 2344-amino-acid chain; its full sequence is Genome polyprotein (2344 aa).

Residues Q492–S653 enclose the SF3 helicase domain. Residue G522 to T529 coordinates ATP. At Y1014 the chain carries O-(5'-phospho-RNA)-tyrosine. Residue Y1014 is modified to O-UMP-tyrosine; transient. The 136-residue stretch at G1109–T1244 folds into the Peptidase C24 domain. Catalysis depends on for 3CLpro activity residues H1135, D1152, and C1212. The RdRp catalytic domain maps to S1495 to L1619. A disulfide bond links C1584 and C1591. The disordered stretch occupies residues P1774–D1796. The segment covering T1781–T1792 has biased composition (low complexity).

Homodimer. As to quaternary structure, homomultimer. Interacts with host type II histo-blood group structures antigens at the surface of target cells. Mn(2+) serves as cofactor. Specific enzymatic cleavages by its own cysteine protease yield mature proteins. The protease cleaves itself from the nascent polyprotein autocatalytically. Precursor p41 can be cleaved by viral 3CLpro into protein p19 and VPg, or cleaved by host protease into protein p23/2 and protein p18. Post-translationally, VPg is uridylylated by the polymerase and is covalently attached to the 5'-end of the polyadenylated genomic and subgenomic RNAs. This uridylylated form acts as a nucleotide-peptide primer for the polymerase.

Its subcellular location is the host cytoplasm. The protein localises to the host endoplasmic reticulum. The protein resides in the virion. The catalysed reaction is a ribonucleoside 5'-triphosphate + H2O = a ribonucleoside 5'-diphosphate + phosphate + H(+). It catalyses the reaction Endopeptidase with a preference for cleavage when the P1 position is occupied by Glu-|-Xaa and the P1' position is occupied by Gly-|-Yaa.. The enzyme catalyses RNA(n) + a ribonucleoside 5'-triphosphate = RNA(n+1) + diphosphate. Together with NTPase and NS4, initiates the formation of the replication complex. Induces the proliferation of the host smooth ER membranes forming long tubular structures. These remodeled membranes probably form the viral factories that contain the replication complex. In terms of biological role, displays NTPase activity, but no helicase activity. Induces the formation of convoluted membranes derived from the host ER. These remodeled membranes probably form the viral factories that contain the replication complex. Together with NS2 and NS4, initiates the formation of the replication complex. Its function is as follows. Probable key protein responsible for the formation of membrane alterations by the virus. Induces the formation of convoluted membranes derived from the host ER. These remodeled membranes probably form the viral factories that contain the replication complex. Together with NS2 and NTPase, initiates the formation of the replication complex. Functionally, viral genome-linked protein is covalently linked to the 5'-end of the positive-strand, negative-strand genomic RNAs and subgenomic RNA. Acts as a genome-linked replication primer. May recruit ribosome to viral RNA thereby promoting viral proteins translation. Interacts with host translation initiation complex to allow the translation of viral proteins. Processes the polyprotein. 3CLpro-RdRp is first released by autocleavage, then all other proteins are cleaved. May cleave polyadenylate-binding protein thereby inhibiting cellular translation. In terms of biological role, replicates genomic and antigenomic RNA by recognizing replications specific signals. Also transcribes a subgenomic mRNA by initiating RNA synthesis internally on antigenomic RNA. This sgRNA codes for structural proteins. Catalyzes the covalent attachment VPg with viral RNAs. Its function is as follows. Capsid protein VP60 self assembles to form an icosahedral capsid with a T=3 symmetry, about 35 nm in diameter, and consisting of 180 capsid proteins. A smaller form of capsid with a diameter of 23 nm might be capsid proteins assembled as icosahedron with T=1 symmetry. The capsid encapsulate VP2 proteins and genomic or subgenomic RNA. Attaches virion to target cells by binding histo-blood group antigens, inducing endocytosis of the viral particle. Acidification of the endosome induces conformational change of capsid protein thereby injecting virus genomic RNA into host cytoplasm. In Oryctolagus cuniculus (Rabbit), this protein is Genome polyprotein.